A 424-amino-acid polypeptide reads, in one-letter code: GTPase Obg (424 aa).

One can recognise an Obg domain in the interval 1–158 (MFVDRARIYI…LWVILELKLL (158 aa)). The OBG-type G domain occupies 159-330 (ADVGLIGFPN…LIYYAAQKLK (172 aa)). Residues 165 to 172 (GFPNVGKS), 190 to 194 (FTTIN), 212 to 215 (DIPG), 282 to 285 (NKMD), and 311 to 313 (SAA) each bind GTP. Residues serine 172 and threonine 192 each coordinate Mg(2+). Residues 347-424 (YTAVEEEPFN…MYDLEFEYFR (78 aa)) form the OCT domain.

This sequence belongs to the TRAFAC class OBG-HflX-like GTPase superfamily. OBG GTPase family. In terms of assembly, monomer. Mg(2+) is required as a cofactor.

It localises to the cytoplasm. Functionally, an essential GTPase which binds GTP, GDP and possibly (p)ppGpp with moderate affinity, with high nucleotide exchange rates and a fairly low GTP hydrolysis rate. Plays a role in control of the cell cycle, stress response, ribosome biogenesis and in those bacteria that undergo differentiation, in morphogenesis control. This chain is GTPase Obg, found in Acetivibrio thermocellus (strain ATCC 27405 / DSM 1237 / JCM 9322 / NBRC 103400 / NCIMB 10682 / NRRL B-4536 / VPI 7372) (Clostridium thermocellum).